A 101-amino-acid chain; its full sequence is Small ribosomal subunit protein uS14 (101 aa).

This sequence belongs to the universal ribosomal protein uS14 family. As to quaternary structure, part of the 30S ribosomal subunit. Contacts proteins S3 and S10.

In terms of biological role, binds 16S rRNA, required for the assembly of 30S particles and may also be responsible for determining the conformation of the 16S rRNA at the A site. In Marinobacter nauticus (strain ATCC 700491 / DSM 11845 / VT8) (Marinobacter aquaeolei), this protein is Small ribosomal subunit protein uS14.